The primary structure comprises 469 residues: Histone chaperone rtt-106 (469 aa).

Disordered regions lie at residues 54–73 (EEPATKRRRVEAQTSGPNGA) and 364–469 (MAEQ…EGEE). Composition is skewed to basic and acidic residues over residues 364-379 (MAEQRKAKKQLAENAK) and 402-415 (ELERAQKEEEQRLQ). Acidic residues-rich tracts occupy residues 416–433 (DEEDEEEEDYDPGSEGES) and 440–469 (SEEEEEEEDGEGEGDEDDDEDMGEGLEGEE).

The protein belongs to the RTT106 family. Interacts with histones H3 and H4.

It is found in the nucleus. It localises to the chromosome. Its function is as follows. Histones H3 and H4 chaperone involved in the nucleosome formation and heterochromatin silencing. Required for the deposition of H3K56ac-carrying H3-H4 complex onto newly-replicated DNA. Plays a role in the transcriptional regulation of the cell-cycle dependent histone genes by creating a repressive structure at the core histone gene promoter. This is Histone chaperone rtt-106 (rtt-106) from Neurospora crassa (strain ATCC 24698 / 74-OR23-1A / CBS 708.71 / DSM 1257 / FGSC 987).